A 287-amino-acid polypeptide reads, in one-letter code: Energy-coupling factor transporter ATP-binding protein EcfA2 (287 aa).

An ABC transporter domain is found at 3 to 245 (IKFENVSYVY…SEWLQKHHLA (243 aa)). 40–47 (GHTGSGKS) is a binding site for ATP.

Belongs to the ABC transporter superfamily. Energy-coupling factor EcfA family. In terms of assembly, forms a stable energy-coupling factor (ECF) transporter complex composed of 2 membrane-embedded substrate-binding proteins (S component), 2 ATP-binding proteins (A component) and 2 transmembrane proteins (T component).

It localises to the cell membrane. In terms of biological role, ATP-binding (A) component of a common energy-coupling factor (ECF) ABC-transporter complex. Unlike classic ABC transporters this ECF transporter provides the energy necessary to transport a number of different substrates. The sequence is that of Energy-coupling factor transporter ATP-binding protein EcfA2 from Lactobacillus delbrueckii subsp. bulgaricus (strain ATCC 11842 / DSM 20081 / BCRC 10696 / JCM 1002 / NBRC 13953 / NCIMB 11778 / NCTC 12712 / WDCM 00102 / Lb 14).